The chain runs to 202 residues: tRNA (guanine-N(7)-)-methyltransferase (202 aa).

The S-adenosyl-L-methionine site is built by Glu-34, Glu-59, Asp-86, and Asp-107. The active site involves Asp-107. Substrate-binding positions include Lys-111, Asp-143, and 181-184 (TDYE).

The protein belongs to the class I-like SAM-binding methyltransferase superfamily. TrmB family.

It catalyses the reaction guanosine(46) in tRNA + S-adenosyl-L-methionine = N(7)-methylguanosine(46) in tRNA + S-adenosyl-L-homocysteine. It participates in tRNA modification; N(7)-methylguanine-tRNA biosynthesis. Its function is as follows. Catalyzes the formation of N(7)-methylguanine at position 46 (m7G46) in tRNA. This is tRNA (guanine-N(7)-)-methyltransferase from Metamycoplasma hominis (strain ATCC 23114 / DSM 25592 / NBRC 14850 / NCTC 10111 / PG21) (Mycoplasma hominis).